The chain runs to 362 residues: Heat-inducible transcription repressor HrcA (362 aa).

This sequence belongs to the HrcA family.

Its function is as follows. Negative regulator of class I heat shock genes (grpE-dnaK-dnaJ and groELS operons). Prevents heat-shock induction of these operons. The protein is Heat-inducible transcription repressor HrcA of Rhizobium leguminosarum bv. trifolii (strain WSM2304).